Reading from the N-terminus, the 971-residue chain is uncharacterized protein (971 aa).

Positions 1 to 24 (MQSNLLKVLGVLAIVATLVCFIFA) are cleaved as a signal peptide. The segment at 127 to 146 (RTRPGKSNLDDSGQMIPIPR) is disordered. 6 helical membrane passes run 611–631 (IKAI…LGFA), 721–741 (LGLS…IVII), 753–773 (AFMA…FLLF), 795–815 (VVMM…LDFV), 832–852 (FIGT…INWF), and 865–885 (GVNM…YGYV). The disordered stretch occupies residues 933–971 (TGRAKSRLEQRNRTLEHAEQNSKKYKKRIGENTNEETLK). A compositionally biased stretch (basic and acidic residues) spans 938–954 (SRLEQRNRTLEHAEQNS).

Belongs to the TrbL/VirB6 family.

Its subcellular location is the cell membrane. This is an uncharacterized protein from Rickettsia prowazekii (strain Madrid E).